A 944-amino-acid polypeptide reads, in one-letter code: Calcium-transporting ATPase type 2C member 2 (944 aa).

Over 1-104 (MGRRLKFLQK…DNAEPVWKKY (104 aa)) the chain is Cytoplasmic. The interaction with ORAI1 stretch occupies residues 69-93 (VDLDSGLSEFAVAQRRLVHGWNEFV). A helical transmembrane segment spans residues 105–125 (LDQFRNPLILLLLGSSVVSVL). Residues 126-127 (TK) are Extracellular-facing. A helical membrane pass occupies residues 128–148 (EYEDAVSIALAVLIVVTVGFI). The Cytoplasmic portion of the chain corresponds to 149–229 (QEYRSEKSLE…EVEPCGKTDS (81 aa)). A helical membrane pass occupies residues 230–250 (PLADGGDLSTLSNVVFMGTLV). Residues 251 to 291 (QCGKGQGVVIGTGEQSQFGEVFKMMRAEETPKTPLQKSMDK) are Extracellular-facing. A Phosphothreonine modification is found at threonine 262. Serine 266 bears the Phosphoserine mark. The helical transmembrane segment at 292–312 (LGKQLTIFSFGIIGLLMLVGW) threads the bilayer. The Cytoplasmic segment spans residues 313–329 (VQGKPFLSMFTVGVSLA). Ca(2+) contacts are provided by valine 330, alanine 331, isoleucine 333, and glutamate 335. The helical transmembrane segment at 330–350 (VAAIPEGLPIVVMVTLVLGVL) threads the bilayer. Residues 351–748 (RMAKKRVIVK…IAALSLITLS (398 aa)) are Extracellular-facing. Residue aspartate 377 is the 4-aspartylphosphate intermediate of the active site. The Mg(2+) site is built by aspartate 672 and aspartate 676. A helical membrane pass occupies residues 749 to 769 (TVCNLPSPLNAMQILWVNIIM). Residues asparagine 766 and aspartate 770 each contribute to the Ca(2+) site. Residues 770-802 (DGPPAQSLGVEPVDRDALRRPPRSVGDTILNRA) lie on the Cytoplasmic side of the membrane. The helical transmembrane segment at 803 to 823 (LILRVLMSAAVIIGGTLFIFW) threads the bilayer. Residues 824 to 835 (REIPANGTSTPR) lie on the Extracellular side of the membrane. The helical transmembrane segment at 836–853 (TTTMAFTCFVFFDLFNAL) threads the bilayer. The Cytoplasmic portion of the chain corresponds to 854-872 (SCRSQTKLIFEIGFFRNRM). The helical transmembrane segment at 873 to 893 (FLYSVLGSLLGQLAVIYAPPL) threads the bilayer. Residues 894-903 (QKVFQTENLS) lie on the Extracellular side of the membrane. A helical transmembrane segment spans residues 904-924 (ALDLLLLTGLASSVFILSELL). Over 925–944 (KLWEKFLSRARPTQMLPEAV) the chain is Cytoplasmic.

Belongs to the cation transport ATPase (P-type) (TC 3.A.3) family. Type IIA subfamily. In terms of assembly, interacts (via N-terminus) with ORAI1 (via N- and C-termini); this interaction regulates Ca(2+) influx at the plasma membrane. Expressed in hippocampal neurons (at protein level). Expressed in lactating mammary epithelium (at protein level).

The protein resides in the golgi apparatus. The protein localises to the trans-Golgi network membrane. Its subcellular location is the cell membrane. It localises to the basolateral cell membrane. The enzyme catalyses Ca(2+)(in) + ATP + H2O = Ca(2+)(out) + ADP + phosphate + H(+). It catalyses the reaction Mn(2+)(in) + ATP + H2O = Mn(2+)(out) + ADP + phosphate + H(+). In terms of biological role, ATP-driven pump that supplies the Golgi apparatus with Ca(2+) and Mn(2+) ions, both essential cofactors for processing and trafficking of newly synthesized proteins in the secretory pathway. Within a catalytic cycle, acquires Ca(2+) or Mn(2+) ions on the cytoplasmic side of the membrane and delivers them to the lumenal side. The transfer of ions across the membrane is coupled to ATP hydrolysis and is associated with a transient phosphorylation that shifts the pump conformation from inward-facing to outward-facing state. Induces Ca(2+) influx independently of its ATP-driven pump function. At the basolateral membrane of mammary epithelial cells, interacts with Ca(2+) channel ORAI1 and mediates Ca(2+) entry independently of the Ca(2+) content of endoplasmic reticulum or Golgi stores. May facilitate transepithelial transport of large quantities of Ca(2+) for milk secretion via activation of Ca(2+) influx channels at the plasma membrane and active Ca(2+) transport at the Golgi apparatus. The protein is Calcium-transporting ATPase type 2C member 2 of Mus musculus (Mouse).